We begin with the raw amino-acid sequence, 435 residues long: Zinc finger CCCH domain-containing protein 10 (435 aa).

The segment at 1 to 36 is disordered; sequence MPDRDSYANGTGSSGGGPGGGGSEEASGAGTGSGGA. A compositionally biased stretch (gly residues) spans 12–35; the sequence is GSSGGGPGGGGSEEASGAGTGSGG. C3H1-type zinc fingers lie at residues 36-63, 73-99, and 134-161; these read ATSD…HPDM, KNEF…HGSK, and KEEV…HLQR. The interval 166-190 is disordered; that stretch reads DARGGGGTGGGGSTGSAPPGRRHDL. A compositionally biased stretch (gly residues) spans 168-179; it reads RGGGGTGGGGST. An omega-N-methylarginine mark is found at R186 and R187. Positions 235 to 281 form a coiled coil; it reads GVECRLLEEENALLRKRVEELKKQVSNLLATNEVLLEQNAQFRNQAK. The segment covering 315–331 has biased composition (polar residues); sequence TTLSSQALQPRPVSQQE. The interval 315–363 is disordered; the sequence is TTLSSQALQPRPVSQQELVAPTGAPAAPPTNAAPPAAPPPPPPHLNPEI. Residues 340-359 show a composition bias toward pro residues; the sequence is AAPPTNAAPPAAPPPPPPHL.

The protein localises to the nucleus. Its function is as follows. Specific regulator of miRNA biogenesis. Binds, via the C3H1-type zinc finger domains, to the binding motif 5'-GCAGCGC-3' on microRNA pri-MIR143 and negatively regulates the processing to mature microRNA. This Mus musculus (Mouse) protein is Zinc finger CCCH domain-containing protein 10 (Zc3h10).